Here is a 343-residue protein sequence, read N- to C-terminus: L-threonine 3-dehydrogenase (343 aa).

Cys38 provides a ligand contact to Zn(2+). Residues Thr40 and His43 each act as charge relay system in the active site. Zn(2+) is bound by residues His63, Glu64, Cys93, Cys96, Cys99, and Cys107. Residues Ile175, Asp195, Arg200, 262–264 (LGL), and 286–287 (IY) each bind NAD(+).

Belongs to the zinc-containing alcohol dehydrogenase family. Homotetramer. The cofactor is Zn(2+).

The protein resides in the cytoplasm. The enzyme catalyses L-threonine + NAD(+) = (2S)-2-amino-3-oxobutanoate + NADH + H(+). It functions in the pathway amino-acid degradation; L-threonine degradation via oxydo-reductase pathway; glycine from L-threonine: step 1/2. Its function is as follows. Catalyzes the NAD(+)-dependent oxidation of L-threonine to 2-amino-3-ketobutyrate. The sequence is that of L-threonine 3-dehydrogenase from Saccharopolyspora erythraea (strain ATCC 11635 / DSM 40517 / JCM 4748 / NBRC 13426 / NCIMB 8594 / NRRL 2338).